The sequence spans 1378 residues: Cell surface hyaluronidase (1378 aa).

The interval Met-1 to Gln-77 is disordered. The Cytoplasmic segment spans residues Met-1–Thr-82. Positions Arg-36–Arg-58 are enriched in pro residues. A helical; Signal-anchor for type II membrane protein transmembrane segment spans residues Tyr-83–Leu-103. Residues Thr-104–Ser-1378 lie on the Extracellular side of the membrane. The G8 domain maps to Arg-121–Arg-247. Residues Asn-171, Asn-264, Asn-360, Asn-527, and Asn-639 are each glycosylated (N-linked (GlcNAc...) asparagine). The region spanning Gly-257–Ala-414 is the GG-type lectin 1 domain. Residues His-672–Phe-694 form a PbH1 1 repeat. Asn-696 carries an N-linked (GlcNAc...) asparagine glycan. A PbH1 2 repeat occupies Thr-714–Arg-736. Asn-742, Asn-854, Asn-905, Asn-996, Asn-1069, Asn-1160, and Asn-1221 each carry an N-linked (GlcNAc...) asparagine glycan. The GG-type lectin 2 domain occupies Asn-1203–Lys-1363.

This sequence belongs to the CEMIP family. Requires Ca(2+) as cofactor.

The protein resides in the cell membrane. It catalyses the reaction Random hydrolysis of (1-&gt;4)-linkages between N-acetyl-beta-D-glucosamine and D-glucuronate residues in hyaluronate.. Its function is as follows. Cell surface hyaluronidase that mediates the initial cleavage of extracellular high-molecular-weight hyaluronan into intermediate-size hyaluronan. Acts as a regulator of angiogenesis in embryos by mediating degradation of extracellular hyaluronan, thereby promoting VEGF signaling. Acts as a regulator of heart development during myocardial and endocardial morphogenesis: involved in the looping stage of heart morphogenesis. Stimulates migration of endocardial cells and increases both myocardial and endocardial fusion. Involved in the restriction of endocardial cushions (ECs) formation to the atrioventricular canal (AVC). Also required for muscle fiber attachment. Is very specific to hyaluronan; not able to cleave chondroitin sulfate or dermatan sulfate. This is Cell surface hyaluronidase (cemip2) from Danio rerio (Zebrafish).